The sequence spans 409 residues: Torsin-4A (409 aa).

The span at 1 to 16 (MGEQDPSDRLRGDQLK) shows a compositional bias: basic and acidic residues. 2 disordered regions span residues 1 to 28 (MGEQDPSDRLRGDQLKEPNQNGKGSFSQ) and 75 to 99 (DNLHEPVNSNPASPRKRKKKRKGRV). Residues 17-28 (EPNQNGKGSFSQ) are compositionally biased toward polar residues. A compositionally biased stretch (basic residues) spans 88-98 (PRKRKKKRKGR). A helical transmembrane segment spans residues 120 to 136 (CLYLLCIIVFLQVYNAI). 192–199 (GPTGVGKS) provides a ligand contact to ATP.

The protein belongs to the ClpA/ClpB family. Torsin subfamily.

The protein resides in the membrane. The polypeptide is Torsin-4A (tor4a) (Danio rerio (Zebrafish)).